The primary structure comprises 445 residues: tRNA-2-methylthio-N(6)-dimethylallyladenosine synthase (445 aa).

In terms of domain architecture, MTTase N-terminal spans 2 to 117 (QGLYIKSYGC…LPELIVKARK (116 aa)). Positions 11, 47, 80, 157, 161, and 164 each coordinate [4Fe-4S] cluster. The 232-residue stretch at 143–374 (KNQKVSAFIS…QELVHKQQLE (232 aa)) folds into the Radical SAM core domain. Residues 377-441 (KKMIGETHPV…KNHLTGIIPN (65 aa)) form the TRAM domain.

Belongs to the methylthiotransferase family. MiaB subfamily. As to quaternary structure, monomer. [4Fe-4S] cluster serves as cofactor.

It is found in the cytoplasm. It catalyses the reaction N(6)-dimethylallyladenosine(37) in tRNA + (sulfur carrier)-SH + AH2 + 2 S-adenosyl-L-methionine = 2-methylsulfanyl-N(6)-dimethylallyladenosine(37) in tRNA + (sulfur carrier)-H + 5'-deoxyadenosine + L-methionine + A + S-adenosyl-L-homocysteine + 2 H(+). In terms of biological role, catalyzes the methylthiolation of N6-(dimethylallyl)adenosine (i(6)A), leading to the formation of 2-methylthio-N6-(dimethylallyl)adenosine (ms(2)i(6)A) at position 37 in tRNAs that read codons beginning with uridine. The sequence is that of tRNA-2-methylthio-N(6)-dimethylallyladenosine synthase from Ehrlichia ruminantium (strain Welgevonden).